The chain runs to 32 residues: Conotoxin sr7a (32 aa).

Intrachain disulfides connect C1–C17, C8–C21, and C16–C31. Position 32 is a serine amide (S32).

As to expression, expressed by the venom duct.

The protein resides in the secreted. Its function is as follows. Elicits hyperactivity when injected intracranially into mice and produces paralysis when injected into the pedal muscle of freshwater snails, Pomacea paludosa, but it has no apparent effect after intramuscular injection into the limpet Patella opea or the freshwater fish Lebistes reticulatus. This Conus spurius (Alphabet cone) protein is Conotoxin sr7a.